The sequence spans 243 residues: Tryptophan synthase alpha chain (243 aa).

Active-site proton acceptor residues include E31 and D42.

The protein belongs to the TrpA family. Tetramer of two alpha and two beta chains.

The enzyme catalyses (1S,2R)-1-C-(indol-3-yl)glycerol 3-phosphate + L-serine = D-glyceraldehyde 3-phosphate + L-tryptophan + H2O. It participates in amino-acid biosynthesis; L-tryptophan biosynthesis; L-tryptophan from chorismate: step 5/5. The alpha subunit is responsible for the aldol cleavage of indoleglycerol phosphate to indole and glyceraldehyde 3-phosphate. This is Tryptophan synthase alpha chain from Staphylococcus epidermidis (strain ATCC 35984 / DSM 28319 / BCRC 17069 / CCUG 31568 / BM 3577 / RP62A).